A 297-amino-acid chain; its full sequence is MLCYVNYKRVKRPVEIPNLEVEIGFGRGDFIVKLAKENPDKNFFGIEISQISIEKLMKRVGKKGLKNVYCTNVDAYWGFYFLFRDNYVENIYMNYPDPWFKKRHHKRRLTKPERLYMFAKKLKLGGEIRIRTDNYEFLEFTKESAKVLDCFEVEEGTLNVKEPLTKYEQKWLSMGKTLYKLILRKVKEPKFVEHPEVEEVRELFPVKVKVESVDPKKIESREIKLDEEVYFKTFKVWQRDKDFLVECLLSEKGYLQKFFIQIKRKEDGYVIDVSPYSEVLRTRNLQRSIQTVAQLLS.

Residues Glu22, Glu47, Asp74, and Asp97 each contribute to the S-adenosyl-L-methionine site. The active site involves Asp97. Residues Lys101, Asp133, and 165-168 each bind substrate; that span reads TKYE.

This sequence belongs to the class I-like SAM-binding methyltransferase superfamily. TrmB family.

The catalysed reaction is guanosine(46) in tRNA + S-adenosyl-L-methionine = N(7)-methylguanosine(46) in tRNA + S-adenosyl-L-homocysteine. It participates in tRNA modification; N(7)-methylguanine-tRNA biosynthesis. Its function is as follows. Catalyzes the formation of N(7)-methylguanine at position 46 (m7G46) in tRNA. This is tRNA (guanine-N(7)-)-methyltransferase from Aquifex aeolicus (strain VF5).